The sequence spans 60 residues: Large ribosomal subunit protein uL30 (60 aa).

This sequence belongs to the universal ribosomal protein uL30 family. Part of the 50S ribosomal subunit.

The sequence is that of Large ribosomal subunit protein uL30 from Streptococcus mutans serotype c (strain ATCC 700610 / UA159).